We begin with the raw amino-acid sequence, 169 residues long: 4-hydroxylaminobenzoate lyase (169 aa).

Belongs to the PnbB family.

It carries out the reaction 4-hydroxylaminobenzoate + H2O + H(+) = 3,4-dihydroxybenzoate + NH4(+). Its function is as follows. Lyase involved in the degradation of nitroaromatic compounds. Catalyzes the conversion of 4-hydroxylaminobenzoate to 3,4-dihydroxybenzoate (protocatechuate). The polypeptide is 4-hydroxylaminobenzoate lyase (Nocardioides sp. (strain LMS-CY)).